The chain runs to 108 residues: ER membrane protein complex subunit 6 (108 aa).

The next 3 membrane-spanning stretches (helical) occupy residues 21–41 (VVSFVRNLTSSFFGCAAGILG), 45–65 (YEGLALYVLGYFFVSFLLFAL), and 86–106 (ILDGAPSYVLTWTLFYSLVYV).

This sequence belongs to the EMC6 family.

It is found in the endoplasmic reticulum membrane. This chain is ER membrane protein complex subunit 6, found in Schizosaccharomyces pombe (strain 972 / ATCC 24843) (Fission yeast).